The primary structure comprises 183 residues: uncharacterized protein (183 aa).

A disordered region spans residues Asp-54–Ala-89.

This is an uncharacterized protein from Human cytomegalovirus (strain AD169) (HHV-5).